Here is a 648-residue protein sequence, read N- to C-terminus: Biosynthetic arginine decarboxylase (648 aa).

K109 bears the N6-(pyridoxal phosphate)lysine mark. Substrate is bound at residue 291-301 (IDVGGGLGIDF).

It belongs to the Orn/Lys/Arg decarboxylase class-II family. SpeA subfamily. It depends on Mg(2+) as a cofactor. Requires pyridoxal 5'-phosphate as cofactor.

It carries out the reaction L-arginine + H(+) = agmatine + CO2. Its pathway is amine and polyamine biosynthesis; agmatine biosynthesis; agmatine from L-arginine: step 1/1. Catalyzes the biosynthesis of agmatine from arginine. The sequence is that of Biosynthetic arginine decarboxylase from Prochlorococcus marinus (strain MIT 9515).